The primary structure comprises 472 residues: Uronate isomerase (472 aa).

It belongs to the metallo-dependent hydrolases superfamily. Uronate isomerase family.

The enzyme catalyses D-glucuronate = D-fructuronate. It catalyses the reaction aldehydo-D-galacturonate = keto-D-tagaturonate. It functions in the pathway carbohydrate metabolism; pentose and glucuronate interconversion. In Oceanobacillus iheyensis (strain DSM 14371 / CIP 107618 / JCM 11309 / KCTC 3954 / HTE831), this protein is Uronate isomerase.